Reading from the N-terminus, the 79-residue chain is D-alanyl carrier protein (79 aa).

One can recognise a Carrier domain in the interval 1-77; the sequence is MDVKAEVIEI…KIVEGVTELR (77 aa). S35 is modified (O-(pantetheine 4'-phosphoryl)serine).

The protein belongs to the DltC family. 4'-phosphopantetheine is transferred from CoA to a specific serine of apo-DCP.

The protein localises to the cytoplasm. The protein operates within cell wall biogenesis; lipoteichoic acid biosynthesis. Its function is as follows. Carrier protein involved in the D-alanylation of lipoteichoic acid (LTA). The loading of thioester-linked D-alanine onto DltC is catalyzed by D-alanine--D-alanyl carrier protein ligase DltA. The DltC-carried D-alanyl group is further transferred to cell membrane phosphatidylglycerol (PG) by forming an ester bond, probably catalyzed by DltD. D-alanylation of LTA plays an important role in modulating the properties of the cell wall in Gram-positive bacteria, influencing the net charge of the cell wall. This is D-alanyl carrier protein from Streptococcus gordonii (strain Challis / ATCC 35105 / BCRC 15272 / CH1 / DL1 / V288).